A 154-amino-acid chain; its full sequence is MDLSTLKPVAGSRKSSTRKARGFSAGKGKTAGRGQKGQKAREGKKLRLSFEGGQMPLMRRMPKRGFNNISRKEYAIVNLDQLNKFDDGTTVSASSLKEAGIIKKELSGVKVLASGKLNKKITIHAAKASQAAQDSIKEAGSKIILTTETADSEN.

Residues 1-61 are disordered; sequence MDLSTLKPVA…GGQMPLMRRM (61 aa).

Belongs to the universal ribosomal protein uL15 family. As to quaternary structure, part of the 50S ribosomal subunit.

Binds to the 23S rRNA. This Oenococcus oeni (strain ATCC BAA-331 / PSU-1) protein is Large ribosomal subunit protein uL15.